A 428-amino-acid polypeptide reads, in one-letter code: Putative gustatory receptor 2a (428 aa).

Residues 1–40 (MDTLRALEPLHRACQVCNLWPWRLAPPPDSEGILLRRSRW) lie on the Cytoplasmic side of the membrane. The chain crosses the membrane as a helical span at residues 41–61 (LELYGWTVLIAATSFTVYGLF). The Extracellular portion of the chain corresponds to 62–145 (QESSVEEKQD…INMRRQTSRR (84 aa)). A helical transmembrane segment spans residues 146 to 166 (AVWILWGYAVSQLLILGAKLL). Topologically, residues 167–173 (SRGDRFP) are cytoplasmic. The chain crosses the membrane as a helical span at residues 174–194 (IYWISYLLPLLVCGLRYFQIF). N-linked (GlcNAc...) asparagine glycosylation is present at N195. At 195-250 (NATQLVRQRLDVLLVALQQLQLHQKGPAVDTVLEEQEDLEEAAMDRLIAVRLVYQR) the chain is on the extracellular side. Residues 251–271 (VWALVALLNRCYGLSMLMQVG) traverse the membrane as a helical segment. Residues 272-300 (NDFLAITSNCYWMFLNFRQSAASPFDILQ) are Cytoplasmic-facing. Residues 301-321 (IVASGVWSAPHLGNVLVLSLL) traverse the membrane as a helical segment. At 322-349 (CDRTAQCASRLALCLHQVSVDLRNESHN) the chain is on the extracellular side. Residue N345 is glycosylated (N-linked (GlcNAc...) asparagine). A helical transmembrane segment spans residues 350 to 370 (ALVGTLVRYCAPLIILVPLQI). Over 371-395 (TQFSLQLLHQRLHFSAAGFFNVDCT) the chain is Cytoplasmic. Residues 396–416 (LLYTIVGATTTYLIILIQFHM) form a helical membrane-spanning segment. Residues 417–428 (SESTIGSDSNGQ) are Extracellular-facing.

It belongs to the insect chemoreceptor superfamily. Gustatory receptor (GR) family. Gr2a subfamily. Expressed in neurons of the terminal external chemosensory organ, the dorsal external chemosensory organ, as well as in the dorsal pharyngeal sense organ of larvae.

It is found in the cell membrane. In terms of biological role, probable gustatory receptor which mediates acceptance or avoidance behavior, depending on its not yet determined substrates. This is Putative gustatory receptor 2a (Gr2a) from Drosophila melanogaster (Fruit fly).